We begin with the raw amino-acid sequence, 254 residues long: Matrix protein (254 aa).

It belongs to the paramyxoviruses M protein family. As to quaternary structure, interacts with glycoprotein G (via N-terminus), and protein N. Interacts with protein M2-1; this interaction mediates the association between proteins M and N.

It localises to the virion. The protein resides in the host cytoplasm. Its subcellular location is the host nucleus. It is found in the host cell membrane. Its function is as follows. Has a crucial role in virus assembly and budding. The matrix interacts with the RNP complex and this association serves two functions: facilitate virion assembly and inhibit the viral transcriptase activity. Early in infection, M is localized to the nucleus and may inhibit host cell transcription. Later on, M can associate with lipid rafts supposely by interacting with the cytoskeleton and with the cytoplasmic tail of glycoprotein G. The binding of M to host membrane is stabilized by the surface expression of the viral glycoproteins. These interactions may allow virus formation by mediating association of the nucleocapsid with the nascent envelope. This is Matrix protein (M) from Avian metapneumovirus (isolate Canada goose/Minnesota/15a/2001) (AMPV).